Here is a 61-residue protein sequence, read N- to C-terminus: Photosystem II reaction center protein K (61 aa).

A propeptide spanning residues 1 to 24 (MLNIFNLVCICIHSVLYSSSFFSA) is cleaved from the precursor. Residues 36-56 (IVDIMPVIPLLFFLLAFVWQA) form a helical membrane-spanning segment.

Belongs to the PsbK family. In terms of assembly, PSII is composed of 1 copy each of membrane proteins PsbA, PsbB, PsbC, PsbD, PsbE, PsbF, PsbH, PsbI, PsbJ, PsbK, PsbL, PsbM, PsbT, PsbX, PsbY, PsbZ, Psb30/Ycf12, at least 3 peripheral proteins of the oxygen-evolving complex and a large number of cofactors. It forms dimeric complexes.

Its subcellular location is the plastid. It localises to the chloroplast thylakoid membrane. One of the components of the core complex of photosystem II (PSII). PSII is a light-driven water:plastoquinone oxidoreductase that uses light energy to abstract electrons from H(2)O, generating O(2) and a proton gradient subsequently used for ATP formation. It consists of a core antenna complex that captures photons, and an electron transfer chain that converts photonic excitation into a charge separation. The chain is Photosystem II reaction center protein K from Glycine max (Soybean).